A 91-amino-acid polypeptide reads, in one-letter code: Large ribosomal subunit protein bL28 (91 aa).

Belongs to the bacterial ribosomal protein bL28 family.

The chain is Large ribosomal subunit protein bL28 from Protochlamydia amoebophila (strain UWE25).